The sequence spans 538 residues: SWM histone demethylase complex subunit phf2 (538 aa).

Disordered stretches follow at residues 28–47, 98–150, and 198–222; these read RFPNDLHPTMFEGEESNQNG, EIES…SSPL, and TKSGRKVHRPNHFDPLVKLPTRRRG. Residues 98–111 are compositionally biased toward basic and acidic residues; sequence EIESSKNQETDAKS. The PHD-type zinc-finger motif lies at 232–288; the sequence is AMKCSVCQRLQSPPKNRIVFCDGCNTPFHQLCHEPYISDELLDSPNGEWFCDDCIRR. Polar residues predominate over residues 367 to 392; sequence GDQYLSLNNGTESQSKTTKHSTSLPS. The disordered stretch occupies residues 367-396; sequence GDQYLSLNNGTESQSKTTKHSTSLPSTEPV.

In terms of assembly, component of the SWM histone demethylase complex composed of at least lsd1, lsd2, phf1 and phf2.

Its subcellular location is the nucleus. Functionally, component of the SWM histone demethylase complex that specifically demethylates H3K9me2, a specific tag for epigenetic transcriptional activation, thereby acting as a corepressor. Has a role in regulating heterochromatin propagation and euchromatic transcription. This chain is SWM histone demethylase complex subunit phf2 (phf2), found in Schizosaccharomyces pombe (strain 972 / ATCC 24843) (Fission yeast).